A 499-amino-acid polypeptide reads, in one-letter code: MEFSVKNGSVEKQRTACLVVGVYEPRRLSAAAEQLDKLSEGYISTLLRRGDLEGKAGQTLLLHNVPNVPADRVLLVGCGKERELTERQYKQIIQKMVQAVSETGSMEVVCFLTELHVKGRTSYWNVRFAIEAIQESLYSYNDFKSIKPEVRREFRRVIFNVANRKDLADAERALEHGKAISTGVAFAKNVANCPPNVCNPAYLAELAKGLAAEYDNIRTTVIDEAEMAALGMNAYLAVSRGSQNPAYLSVIEYKNHPNPDAKPIVLVGKGLTFDSGGISIKPSDSMDEMKYDMGGAASVYGTMKALAEMKLPLNVIGVLAGCENMPDGNAYRPGDILTTMNGLTVEVLNTDAEGRLVLCDTLTYVERFEPELVIDMATLTGACMIALGAHNSGLMSTSNVLANDLLNAAEQADDKAWRLPLGEEYQEQLKSNFADLANIGGRLGGAITAGQLLSNFTKKYVWAHLDIAGTAWKSGVAKGATGRPVSLLSQFLINKANNQ.

Residues K269 and D274 each contribute to the Mn(2+) site. Residue K281 is part of the active site. D292, D351, and E353 together coordinate Mn(2+). The active site involves R355.

Belongs to the peptidase M17 family. The cofactor is Mn(2+).

The protein resides in the cytoplasm. The enzyme catalyses Release of an N-terminal amino acid, Xaa-|-Yaa-, in which Xaa is preferably Leu, but may be other amino acids including Pro although not Arg or Lys, and Yaa may be Pro. Amino acid amides and methyl esters are also readily hydrolyzed, but rates on arylamides are exceedingly low.. It carries out the reaction Release of an N-terminal amino acid, preferentially leucine, but not glutamic or aspartic acids.. In terms of biological role, presumably involved in the processing and regular turnover of intracellular proteins. Catalyzes the removal of unsubstituted N-terminal amino acids from various peptides. This chain is Probable cytosol aminopeptidase, found in Actinobacillus pleuropneumoniae serotype 7 (strain AP76).